A 514-amino-acid chain; its full sequence is Putative binding protein HI_0213 (514 aa).

Positions 1-23 (MNNLFALCQRSAVIFSIIFTVVA) are cleaved as a signal peptide. Cys24 carries N-palmitoyl cysteine lipidation. Residue Cys24 is the site of S-diacylglycerol cysteine attachment.

Belongs to the bacterial solute-binding protein 5 family.

The protein resides in the cell membrane. Its function is as follows. Part of a binding-protein-dependent transport system. The sequence is that of Putative binding protein HI_0213 from Haemophilus influenzae (strain ATCC 51907 / DSM 11121 / KW20 / Rd).